A 526-amino-acid polypeptide reads, in one-letter code: Probable feruloyl esterase B-2 (526 aa).

The N-terminal stretch at 1–18 (MTKLSLLPLLTLASAVLA) is a signal peptide. Cystine bridges form between Cys27-Cys74 and Cys62-Cys113. Asn52 carries N-linked (GlcNAc...) asparagine glycosylation. An N-linked (GlcNAc...) asparagine glycan is attached at Asn137. Disulfide bonds link Cys186/Cys441, Cys255/Cys272, Cys281/Cys291, and Cys503/Cys525. The active-site Acyl-ester intermediate is Ser187. N-linked (GlcNAc...) asparagine glycosylation is present at Asn233. Asp256, Asp259, Ala261, Asp263, and Ile265 together coordinate Ca(2+). An N-linked (GlcNAc...) asparagine glycan is attached at Asn311. Active-site charge relay system residues include Asp400 and His440. Asn516 carries N-linked (GlcNAc...) asparagine glycosylation.

Belongs to the tannase family.

The protein resides in the secreted. The catalysed reaction is feruloyl-polysaccharide + H2O = ferulate + polysaccharide.. Functionally, involved in degradation of plant cell walls. Hydrolyzes the feruloyl-arabinose ester bond in arabinoxylans as well as the feruloyl-galactose and feruloyl-arabinose ester bonds in pectin. The sequence is that of Probable feruloyl esterase B-2 (faeB-2) from Aspergillus fumigatus (strain CBS 144.89 / FGSC A1163 / CEA10) (Neosartorya fumigata).